A 671-amino-acid chain; its full sequence is Chitin biosynthesis protein CHS5 (671 aa).

In terms of domain architecture, Fibronectin type-III spans K78–M168. The region spanning H166 to L262 is the BRCT domain. Residues E280–K671 are disordered. The residue at position 305 (T305) is a Phosphothreonine. The span at A311–S321 shows a compositional bias: polar residues. Basic and acidic residues predominate over residues E322–H332. Residues S338, S362, S365, S383, and S384 each carry the phosphoserine modification. A compositionally biased stretch (polar residues) spans A349–S365. Residues K409 to E419 show a composition bias toward basic and acidic residues. Residues N434–E443 are compositionally biased toward polar residues. Over residues E461–E486 the composition is skewed to acidic residues. Positions D487–E521 are enriched in basic and acidic residues. A compositionally biased stretch (acidic residues) spans D522–G538. The segment covering Q542–I551 has biased composition (polar residues). S573 and S579 each carry phosphoserine. Residues E581–E591 are compositionally biased toward basic and acidic residues. A Glycyl lysine isopeptide (Lys-Gly) (interchain with G-Cter in ubiquitin) cross-link involves residue K584. The residue at position 590 (S590) is a Phosphoserine. The segment covering G606–L620 has biased composition (polar residues). The segment covering E627–T638 has biased composition (acidic residues). Positions N657 to K671 are enriched in basic residues.

Belongs to the CHS5 family. In terms of assembly, component of the CHS5/6 complex composed of the 4 CHAPS proteins BCH1, BCH2, BUD7, and CHS6 as well as at least CHS5 and GTP-bound ARF1. The complex interacts with the cargo protein CHS3.

It localises to the golgi apparatus. The protein resides in the trans-Golgi network membrane. Its function is as follows. Component of the CHS5/6 complex which mediates export of specific cargo proteins, including chitin synthase CHS3. Also involved in targeting FUS1 to sites of polarized growth. The polypeptide is Chitin biosynthesis protein CHS5 (CHS5) (Saccharomyces cerevisiae (strain ATCC 204508 / S288c) (Baker's yeast)).